We begin with the raw amino-acid sequence, 121 residues long: Small ribosomal subunit protein uS13 (121 aa).

The interval 94–121 is disordered; that stretch reads GLPVRGQNTKNNSRTRKGPRRTVANKKK. Residues 106 to 121 are compositionally biased toward basic residues; that stretch reads SRTRKGPRRTVANKKK.

Belongs to the universal ribosomal protein uS13 family. As to quaternary structure, part of the 30S ribosomal subunit. Forms a loose heterodimer with protein S19. Forms two bridges to the 50S subunit in the 70S ribosome.

Functionally, located at the top of the head of the 30S subunit, it contacts several helices of the 16S rRNA. In the 70S ribosome it contacts the 23S rRNA (bridge B1a) and protein L5 of the 50S subunit (bridge B1b), connecting the 2 subunits; these bridges are implicated in subunit movement. Contacts the tRNAs in the A and P-sites. This chain is Small ribosomal subunit protein uS13, found in Halalkalibacterium halodurans (strain ATCC BAA-125 / DSM 18197 / FERM 7344 / JCM 9153 / C-125) (Bacillus halodurans).